The primary structure comprises 125 residues: uncharacterized protein (125 aa).

2 consecutive transmembrane segments (helical) span residues 28-48 (VFIT…SQFC) and 54-74 (FFLP…LFFF).

It is found in the membrane. This is an uncharacterized protein from Saccharomyces cerevisiae (strain ATCC 204508 / S288c) (Baker's yeast).